Reading from the N-terminus, the 98-residue chain is Putative pterin-4-alpha-carbinolamine dehydratase (98 aa).

This sequence belongs to the pterin-4-alpha-carbinolamine dehydratase family.

It carries out the reaction (4aS,6R)-4a-hydroxy-L-erythro-5,6,7,8-tetrahydrobiopterin = (6R)-L-erythro-6,7-dihydrobiopterin + H2O. The protein is Putative pterin-4-alpha-carbinolamine dehydratase of Jannaschia sp. (strain CCS1).